A 364-amino-acid polypeptide reads, in one-letter code: 3-isopropylmalate dehydrogenase (364 aa).

Position 78 to 91 (78 to 91 (GKKWDYLSIDKRPE)) interacts with NAD(+). Arg-99, Arg-109, Arg-138, and Asp-227 together coordinate substrate. Asp-227, Asp-251, and Asp-255 together coordinate Mg(2+). 285 to 297 (GSAPDIAGKNIAN) is an NAD(+) binding site.

This sequence belongs to the isocitrate and isopropylmalate dehydrogenases family. LeuB type 1 subfamily. In terms of assembly, homodimer. The cofactor is Mg(2+). It depends on Mn(2+) as a cofactor.

The protein localises to the cytoplasm. The catalysed reaction is (2R,3S)-3-isopropylmalate + NAD(+) = 4-methyl-2-oxopentanoate + CO2 + NADH. It participates in amino-acid biosynthesis; L-leucine biosynthesis; L-leucine from 3-methyl-2-oxobutanoate: step 3/4. Catalyzes the oxidation of 3-carboxy-2-hydroxy-4-methylpentanoate (3-isopropylmalate) to 3-carboxy-4-methyl-2-oxopentanoate. The product decarboxylates to 4-methyl-2 oxopentanoate. The polypeptide is 3-isopropylmalate dehydrogenase (Buchnera aphidicola subsp. Uroleucon erigeronensis).